The following is a 367-amino-acid chain: Anhydro-N-acetylmuramic acid kinase (367 aa).

13-20 contacts ATP; sequence GTSMDGAD.

It belongs to the anhydro-N-acetylmuramic acid kinase family.

It catalyses the reaction 1,6-anhydro-N-acetyl-beta-muramate + ATP + H2O = N-acetyl-D-muramate 6-phosphate + ADP + H(+). It functions in the pathway amino-sugar metabolism; 1,6-anhydro-N-acetylmuramate degradation. Its pathway is cell wall biogenesis; peptidoglycan recycling. Functionally, catalyzes the specific phosphorylation of 1,6-anhydro-N-acetylmuramic acid (anhMurNAc) with the simultaneous cleavage of the 1,6-anhydro ring, generating MurNAc-6-P. Is required for the utilization of anhMurNAc either imported from the medium or derived from its own cell wall murein, and thus plays a role in cell wall recycling. The sequence is that of Anhydro-N-acetylmuramic acid kinase from Neisseria meningitidis serogroup B (strain ATCC BAA-335 / MC58).